Consider the following 188-residue polypeptide: Molybdopterin synthase catalytic subunit (188 aa).

The span at 1–14 (MTTQPPQDQTSTTP) shows a compositional bias: low complexity. The tract at residues 1-23 (MTTQPPQDQTSTTPSLPPHLDPT) is disordered. Residues 134-135 (HR), Lys150, and 157-159 (KRE) contribute to the substrate site.

This sequence belongs to the MoaE family. MOCS2B subfamily. In terms of assembly, heterotetramer; composed of 2 small (MOCS2A) and 2 large (MOCS2B) subunits.

The protein localises to the cytoplasm. The catalysed reaction is 2 [molybdopterin-synthase sulfur-carrier protein]-C-terminal-Gly-aminoethanethioate + cyclic pyranopterin phosphate + H2O = molybdopterin + 2 [molybdopterin-synthase sulfur-carrier protein]-C-terminal Gly-Gly + 2 H(+). Its pathway is cofactor biosynthesis; molybdopterin biosynthesis. Its function is as follows. Catalytic subunit of the molybdopterin synthase complex, a complex that catalyzes the conversion of precursor Z into molybdopterin. Acts by mediating the incorporation of 2 sulfur atoms from thiocarboxylated MOCS2A into precursor Z to generate a dithiolene group. In Neosartorya fischeri (strain ATCC 1020 / DSM 3700 / CBS 544.65 / FGSC A1164 / JCM 1740 / NRRL 181 / WB 181) (Aspergillus fischerianus), this protein is Molybdopterin synthase catalytic subunit.